We begin with the raw amino-acid sequence, 1374 residues long: Y' element ATP-dependent helicase YML133C (1374 aa).

Positions 375-552 (EIYMADTPSV…LQRIGLTGLA (178 aa)) constitute a Helicase ATP-binding domain. 388 to 395 (APPGYGKT) contributes to the ATP binding site. Residues 609-758 (KLLLALFEIE…EFYGLESKKG (150 aa)) enclose the Helicase C-terminal domain. Residues 832-975 (ANASTNATTN…ATTTESTNAS (144 aa)) show a composition bias toward low complexity. The interval 832–999 (ANASTNATTN…RFHPVTDINK (168 aa)) is disordered. Basic and acidic residues predominate over residues 976–999 (AKEDANKDGNAEDNRFHPVTDINK).

The protein belongs to the helicase family. Yeast subtelomeric Y' repeat subfamily.

In terms of biological role, catalyzes DNA unwinding and is involved in telomerase-independent telomere maintenance. The protein is Y' element ATP-dependent helicase YML133C of Saccharomyces cerevisiae (strain ATCC 204508 / S288c) (Baker's yeast).